We begin with the raw amino-acid sequence, 390 residues long: Heparan sulfate glucosamine 3-O-sulfotransferase 3B1 (390 aa).

The segment at 1 to 25 is disordered; that stretch reads MGQRLSGGRSCLDVPGRFLPQPPPP. Topologically, residues 1–32 are cytoplasmic; the sequence is MGQRLSGGRSCLDVPGRFLPQPPPPPPPVRRK. The helical; Signal-anchor for type II membrane protein transmembrane segment at 33-53 threads the bilayer; sequence LALLFAMLCIWLYMFLYSCAG. At 54–390 the chain is on the lumenal side; it reads SCTAAPGLLL…QMTGRDFGWD (337 aa). The disordered stretch occupies residues 79–125; it reads TAPNETSPKMPFRAPPANSLAAGKDKTVGAGSQEEQSPEAPDSPSPI. A glycan (N-linked (GlcNAc...) asparagine) is linked at Asn82. 147–151 lines the 3'-phosphoadenylyl sulfate pocket; the sequence is KGGTR. Substrate contacts are provided by residues 169–175 and 200–203; these read EPHFFDR and KTPS. 3'-phosphoadenylyl sulfate contacts are provided by Arg228 and Ser236. Asn258 is a glycosylation site (N-linked (GlcNAc...) asparagine). Position 268-269 (268-269) interacts with substrate; sequence WS. Asn329 is a glycosylation site (N-linked (GlcNAc...) asparagine). An intrachain disulfide couples Cys336 to Cys348. Residue 353 to 357 coordinates 3'-phosphoadenylyl sulfate; it reads KGRAH.

Belongs to the sulfotransferase 1 family.

Its subcellular location is the golgi apparatus membrane. The catalysed reaction is alpha-D-glucosaminyl-[heparan sulfate](n) + 3'-phosphoadenylyl sulfate = 3-sulfo-alpha-D-glucosaminyl-[heparan sulfate](n) + adenosine 3',5'-bisphosphate + H(+). In terms of biological role, sulfotransferase that utilizes 3'-phospho-5'-adenylyl sulfate (PAPS) to catalyze the transfer of a sulfo group to an N-unsubstituted glucosamine linked to a 2-O-sulfo iduronic acid unit on heparan sulfate. Catalyzes the O-sulfation of glucosamine in IdoUA2S-GlcNS and also in IdoUA2S-GlcNH2. Unlike HS3ST1/3-OST-1, does not convert non-anticoagulant heparan sulfate to anticoagulant heparan sulfate. The protein is Heparan sulfate glucosamine 3-O-sulfotransferase 3B1 (Hs3st3b1) of Mus musculus (Mouse).